The chain runs to 144 residues: Sirohydrochlorin cobaltochelatase (144 aa).

H9 functions as the Proton acceptor in the catalytic mechanism. H9 provides a ligand contact to Co(2+). H9 lines the Ni(2+) pocket. Residues E45 and 70 to 75 (LAPGNH) each bind substrate. Co(2+) is bound at residue H75. H75 serves as a coordination point for Ni(2+). Residues 89–112 (GDDEGGHHHHHDHEHHHHHHDTTA) are disordered. Residues 95-108 (HHHHHDHEHHHHHH) are compositionally biased toward basic residues.

This sequence belongs to the CbiX family. CbiXS subfamily. As to quaternary structure, homotetramer; dimer of dimers.

The catalysed reaction is Co-sirohydrochlorin + 2 H(+) = sirohydrochlorin + Co(2+). The enzyme catalyses Ni-sirohydrochlorin + 2 H(+) = sirohydrochlorin + Ni(2+). It functions in the pathway cofactor biosynthesis; adenosylcobalamin biosynthesis; cob(II)yrinate a,c-diamide from sirohydrochlorin (anaerobic route): step 1/10. Its function is as follows. Catalyzes the insertion of Co(2+) into sirohydrochlorin as part of the anaerobic pathway to cobalamin biosynthesis. Involved in the biosynthesis of the unique nickel-containing tetrapyrrole coenzyme F430, the prosthetic group of methyl-coenzyme M reductase (MCR), which plays a key role in methanogenesis and anaerobic methane oxidation. Catalyzes the insertion of Ni(2+) into sirohydrochlorin to yield Ni-sirohydrochlorin. In Methanococcus maripaludis (strain DSM 14266 / JCM 13030 / NBRC 101832 / S2 / LL), this protein is Sirohydrochlorin cobaltochelatase.